The sequence spans 239 residues: MKLINCISIALLCTLVDFSSAEITVISNLAVVGSPESHVGTPNKTLYANIQNLWCGAQNLGEHIDVEYGEFTRLSDGKVFKGTVNQGKVYLEIGKASVKVAGRYRCEVRTLDKEIHSGNLIIYMPPVLDFPAAVRVSEVLNARPPHVIGAERRGLHGERMVLECPVLANPEPMVRWEKNGEPLGNSDSIEYDGNNLILNSLTEDHIGKYRCIGDNSFPLFVDGPAIPHQIYFDQDIKVL.

The signal sequence occupies residues 1–21 (MKLINCISIALLCTLVDFSSA). Asn-43 is a glycosylation site (N-linked (GlcNAc...) asparagine). An Ig-like C2-type domain is found at 145–211 (PHVIGAERRG…TEDHIGKYRC (67 aa)). Cys-164 and Cys-211 are joined by a disulfide.

As to expression, expressed in body wall muscles.

It localises to the secreted. Functionally, probably not involved in maintaining the position of ASI and ASH head neuron cell bodies and ventral nerve cord axons of PVQ, PVP, RMEV, AVK and HSN neurons. In Caenorhabditis elegans, this protein is Zwei Ig domain protein zig-7.